A 467-amino-acid chain; its full sequence is Cysteine--tRNA ligase (467 aa).

A Zn(2+)-binding site is contributed by Cys28. A 'HIGH' region motif is present at residues 30 to 40 (ITAYDYSHIGH). Zn(2+) contacts are provided by Cys211, His236, and Glu240. Residues 268–272 (KMSKS) carry the 'KMSKS' region motif. Residue Lys271 coordinates ATP.

The protein belongs to the class-I aminoacyl-tRNA synthetase family. Requires Zn(2+) as cofactor.

The protein resides in the cytoplasm. The enzyme catalyses tRNA(Cys) + L-cysteine + ATP = L-cysteinyl-tRNA(Cys) + AMP + diphosphate. This is Cysteine--tRNA ligase (cysS) from Archaeoglobus fulgidus (strain ATCC 49558 / DSM 4304 / JCM 9628 / NBRC 100126 / VC-16).